The following is a 118-amino-acid chain: MLEFAPICISLVISLLLSLILLVVPFLFSSNSSTYPEKLSAYECGFDPFGDARSRFDIRFYLVSILFIIFDLEVTFFFPWAVSFNKIDLFGFWSMMAFLLILTIGFLYEWKRGALDWE.

The next 3 membrane-spanning stretches (helical) occupy residues 7-27, 62-82, and 87-107; these read ICIS…VPFL, LVSI…PWAV, and IDLF…IGFL.

It belongs to the complex I subunit 3 family.

It is found in the mitochondrion membrane. It catalyses the reaction a ubiquinone + NADH + 5 H(+)(in) = a ubiquinol + NAD(+) + 4 H(+)(out). In terms of biological role, core subunit of the mitochondrial membrane respiratory chain NADH dehydrogenase (Complex I) that is believed to belong to the minimal assembly required for catalysis. Complex I functions in the transfer of electrons from NADH to the respiratory chain. The immediate electron acceptor for the enzyme is believed to be ubiquinone. The polypeptide is NADH-ubiquinone oxidoreductase chain 3 (ND3) (Oenothera berteroana (Bertero's evening primrose)).